The sequence spans 287 residues: 4-hydroxybenzoate octaprenyltransferase (287 aa).

9 consecutive transmembrane segments (helical) span residues Val-21–Ala-41, Phe-44–Val-64, Val-91–Leu-111, Leu-112–Phe-132, Leu-139–Thr-159, Val-160–Val-180, Leu-211–Leu-231, Tyr-235–Ile-255, and Cys-263–Leu-283.

Belongs to the UbiA prenyltransferase family. Mg(2+) is required as a cofactor.

Its subcellular location is the cell inner membrane. It catalyses the reaction all-trans-octaprenyl diphosphate + 4-hydroxybenzoate = 4-hydroxy-3-(all-trans-octaprenyl)benzoate + diphosphate. It participates in cofactor biosynthesis; ubiquinone biosynthesis. Catalyzes the prenylation of para-hydroxybenzoate (PHB) with an all-trans polyprenyl group. Mediates the second step in the final reaction sequence of ubiquinone-8 (UQ-8) biosynthesis, which is the condensation of the polyisoprenoid side chain with PHB, generating the first membrane-bound Q intermediate 3-octaprenyl-4-hydroxybenzoate. The polypeptide is 4-hydroxybenzoate octaprenyltransferase (Coxiella burnetii (strain CbuK_Q154) (Coxiella burnetii (strain Q154))).